A 140-amino-acid polypeptide reads, in one-letter code: uncharacterized protein (140 aa).

The next 2 helical transmembrane spans lie at 4–21 and 26–48; these read ILKF…YLFG and LVKV…SGYL.

The protein belongs to the bacteriophage holin family. Cp-1 holin subfamily.

It is found in the cell membrane. This is an uncharacterized protein from Listeria monocytogenes serovar 1/2a (strain ATCC BAA-679 / EGD-e).